A 621-amino-acid chain; its full sequence is Lethal(3)malignant brain tumor-like protein 4 (621 aa).

A disordered region spans residues 1-48; sequence MRQPNRKRKLSLESTERMNQDRCTGQTEEEKKPGEVTTPSKRESSVTT. Composition is skewed to basic and acidic residues over residues 10–20 and 28–44; these read LSLESTERMNQ and EEEK…KRES. MBT repeat units follow at residues 52-152, 160-260, and 269-364; these read WSWE…LHIP, FVWM…LVAP, and FSWT…LEVP. The segment at 370–414 adopts a CCHHC-type zinc-finger fold; that stretch reads VKILPGQPACPTPGCRGIGHIRGPRYAGHHSAFGCPYSDVNLKRE. Positions 379, 384, 398, and 404 each coordinate Zn(2+). Residues 543 to 607 enclose the SAM domain; the sequence is WTVDEVAEFV…YNSILMFRNS (65 aa).

The protein localises to the nucleus. Its function is as follows. Putative Polycomb group (PcG) protein. PcG proteins maintain the transcriptionally repressive state of genes, probably via a modification of chromatin, rendering it heritably changed in its expressibility. This chain is Lethal(3)malignant brain tumor-like protein 4 (L3mbtl4), found in Mus musculus (Mouse).